Here is a 717-residue protein sequence, read N- to C-terminus: MTSQPLRLAEEYGPSPGESELAVNPFDGLPFSSRYYELLKQRQALPIWAARFTFLEQLESNPTGVVLVSGEPGSGKSTQIPQWCAEFALARGFQKGQVTVTQPYPLAARSLALRVADEMDLTLGHEVGYSIPQEDCTGPNTLLRFCWDRLLLQEVASTRGTGAWGVLVLDEAQERSVASDSLQGLLQDARLEKLPGDLRVVVVTDPALEPKLRAFWGNPPIVHIPREPGERPSPIYWDTIPPDRVEAACQAVLELCRKELPGDVLVFLPSEEEISLCCESLSREVESLLLQGLPPRVLPLHPDCGRAVQAVYEDMDARKVVVTHWLADFSFSLPSIQHVIDSGLELRSVYNPRIRAEFQVLRPISKCQAEARRLRARGFPPGSCLCLYPKSFLELEAPPLPQPRVCEENLSSLVLLLKRRQIAEPGECHFLDQPAPEALMQALEDLDYLAALDDDGDLSDLGVILSEFPLAPELAKALLASCEFDCVDEMLTLAAMLTAAPGFTRPPLSAEEAALRRALEHTDGDHSSLIQVYEAFIQSGADEAWCQARGLNWAALCQAHKLRGELLELMQRIELPLSLPAFGSEQNRRDLQKALVSGYFLKVARDTDGTGNYLLLTHKHVAQLSSYCCYRSRRAPARPPPWVLYHNFTISKDNCLSIVSEIQPQMLVELAPPYFLSNLPPSESRDLLNQLREGMADSTAGSKSSSAQEFRDPCVLQ.

In terms of domain architecture, Helicase ATP-binding spans glutamine 57–proline 225. Glycine 70 to serine 77 serves as a coordination point for ATP. A DEAQ box motif is present at residues aspartate 170–glutamine 173. The region spanning alanine 248–aspartate 447 is the Helicase C-terminal domain. Positions glycine 694–glutamine 717 are disordered. Over residues threonine 699–glutamine 708 the composition is skewed to polar residues.

It is found in the nucleus. Might be involved in RNA metabolism; it is missing helicase motif III and may not have helicase activity. The protein is ATP-dependent RNA helicase homolog DQX1 (DQX1) of Homo sapiens (Human).